Here is a 478-residue protein sequence, read N- to C-terminus: Aspartate ammonia-lyase (478 aa).

L-aspartate is bound by residues Thr-104, Ser-143, Thr-144, Asn-145, and Thr-190. Positions 320–329 are SS loop; sequence GSSIMPAKVN. The Proton acceptor role is filled by Ser-321. Residues Ser-322 and Lys-327 each coordinate L-aspartate.

The protein belongs to the class-II fumarase/aspartase family. Aspartase subfamily. Homotetramer.

It catalyses the reaction L-aspartate = fumarate + NH4(+). Catalyzes the reversible conversion of L-aspartate to fumarate and ammonia. The chain is Aspartate ammonia-lyase (aspA) from Escherichia coli O157:H7.